Reading from the N-terminus, the 427-residue chain is 3-phosphoshikimate 1-carboxyvinyltransferase (427 aa).

3-phosphoshikimate is bound by residues K22, S23, and R27. K22 is a binding site for phosphoenolpyruvate. Residues G96 and R124 each coordinate phosphoenolpyruvate. 3-phosphoshikimate-binding residues include S170, S171, Q172, S198, D314, N337, and K341. Q172 is a binding site for phosphoenolpyruvate. The Proton acceptor role is filled by D314. Phosphoenolpyruvate-binding residues include R345, R387, and K412.

Belongs to the EPSP synthase family. As to quaternary structure, monomer.

The protein localises to the cytoplasm. It carries out the reaction 3-phosphoshikimate + phosphoenolpyruvate = 5-O-(1-carboxyvinyl)-3-phosphoshikimate + phosphate. It functions in the pathway metabolic intermediate biosynthesis; chorismate biosynthesis; chorismate from D-erythrose 4-phosphate and phosphoenolpyruvate: step 6/7. Its function is as follows. Catalyzes the transfer of the enolpyruvyl moiety of phosphoenolpyruvate (PEP) to the 5-hydroxyl of shikimate-3-phosphate (S3P) to produce enolpyruvyl shikimate-3-phosphate and inorganic phosphate. This Tolumonas auensis (strain DSM 9187 / NBRC 110442 / TA 4) protein is 3-phosphoshikimate 1-carboxyvinyltransferase.